Consider the following 829-residue polypeptide: Transcription activator GutR (829 aa).

A DNA-binding region (H-T-H motif) is located at residues 42 to 61 (IDKIALQLGVSPNTIKSWIG). 200–207 (GWAGMGKT) contacts ATP. 3 TPR repeats span residues 697-730 (HRVL…SSTY), 736-769 (IEAY…KHNA), and 775-808 (IYYH…IDSW).

Activator of the glucitol dehydrogenase gene (gutB). The protein is Transcription activator GutR (gutR) of Bacillus subtilis (strain 168).